The chain runs to 241 residues: MSQEITQKDNNDHLVQSSDPDHPANMIPDLCRKFYNWGWVTGTGGGTSIRRGDHIFIAPSGVQKELMQPHNIFVLEFPTPKYPPSDRKYIRKPLDLKPSACTPLFLAAFERGAGCCIHTHSQWAVLVTLLVEREKGPGGYFEISNIEQIKGIPRGKGKGMMGFHDTLRIPIIENTAFEEDLTGSLEKAMEENPDTYAVLVKRHGIYVWGDDVAKAKTQCESLDYLFQLAVEMHKLGLPWVK.

Residues 1-12 are compositionally biased toward basic and acidic residues; it reads MSQEITQKDNND. The tract at residues 1–22 is disordered; sequence MSQEITQKDNNDHLVQSSDPDH. Substrate is bound at residue cysteine 101. Zn(2+) contacts are provided by histidine 118 and histidine 120. Residue glutamate 147 is the Proton donor/acceptor of the active site. A Zn(2+)-binding site is contributed by histidine 203.

It belongs to the aldolase class II family. MtnB subfamily. Zn(2+) serves as cofactor.

It is found in the cytoplasm. The catalysed reaction is 5-(methylsulfanyl)-D-ribulose 1-phosphate = 5-methylsulfanyl-2,3-dioxopentyl phosphate + H2O. It participates in amino-acid biosynthesis; L-methionine biosynthesis via salvage pathway; L-methionine from S-methyl-5-thio-alpha-D-ribose 1-phosphate: step 2/6. Catalyzes the dehydration of methylthioribulose-1-phosphate (MTRu-1-P) into 2,3-diketo-5-methylthiopentyl-1-phosphate (DK-MTP-1-P). In Aspergillus terreus (strain NIH 2624 / FGSC A1156), this protein is Methylthioribulose-1-phosphate dehydratase.